The primary structure comprises 210 residues: Outer-membrane lipoprotein LolB (210 aa).

An N-terminal signal peptide occupies residues 1–26; it reads MSKLKIDTKRRFSLLIALVLIISLSS. Cysteine 27 carries the N-palmitoyl cysteine lipid modification. The S-diacylglycerol cysteine moiety is linked to residue cysteine 27.

Belongs to the LolB family. As to quaternary structure, monomer.

The protein localises to the cell outer membrane. Plays a critical role in the incorporation of lipoproteins in the outer membrane after they are released by the LolA protein. The sequence is that of Outer-membrane lipoprotein LolB from Francisella tularensis subsp. novicida (strain U112).